The following is a 342-amino-acid chain: Anthranilate phosphoribosyltransferase (342 aa).

5-phospho-alpha-D-ribose 1-diphosphate is bound by residues G90, 93–94 (GS), T98, 100–103 (NIST), 118–126 (KHGNRRATS), and S130. G90 is an anthranilate binding site. Residue S102 coordinates Mg(2+). N121 is an anthranilate binding site. R176 contacts anthranilate. Residues D235 and E236 each coordinate Mg(2+).

Belongs to the anthranilate phosphoribosyltransferase family. As to quaternary structure, homodimer. Requires Mg(2+) as cofactor.

The enzyme catalyses N-(5-phospho-beta-D-ribosyl)anthranilate + diphosphate = 5-phospho-alpha-D-ribose 1-diphosphate + anthranilate. It functions in the pathway amino-acid biosynthesis; L-tryptophan biosynthesis; L-tryptophan from chorismate: step 2/5. Its function is as follows. Catalyzes the transfer of the phosphoribosyl group of 5-phosphorylribose-1-pyrophosphate (PRPP) to anthranilate to yield N-(5'-phosphoribosyl)-anthranilate (PRA). The sequence is that of Anthranilate phosphoribosyltransferase from Rhodopirellula baltica (strain DSM 10527 / NCIMB 13988 / SH1).